Consider the following 323-residue polypeptide: tRNA dimethylallyltransferase (323 aa).

16 to 23 serves as a coordination point for ATP; it reads GPTASGKT. 18-23 is a binding site for substrate; sequence TASGKT. Interaction with substrate tRNA regions lie at residues 41–44, 165–169, 253–258, and 286–293; these read DSAL, QRIQR, RCVGYR, and KRQITWLR.

The protein belongs to the IPP transferase family. Monomer. Mg(2+) is required as a cofactor.

The catalysed reaction is adenosine(37) in tRNA + dimethylallyl diphosphate = N(6)-dimethylallyladenosine(37) in tRNA + diphosphate. In terms of biological role, catalyzes the transfer of a dimethylallyl group onto the adenine at position 37 in tRNAs that read codons beginning with uridine, leading to the formation of N6-(dimethylallyl)adenosine (i(6)A). The sequence is that of tRNA dimethylallyltransferase from Ralstonia nicotianae (strain ATCC BAA-1114 / GMI1000) (Ralstonia solanacearum).